Reading from the N-terminus, the 149-residue chain is Large ribosomal subunit protein bL9 (149 aa).

Belongs to the bacterial ribosomal protein bL9 family.

Binds to the 23S rRNA. This Endomicrobium trichonymphae protein is Large ribosomal subunit protein bL9.